The chain runs to 557 residues: CDP-diacylglycerol--glycerol-3-phosphate 3-phosphatidyltransferase, mitochondrial (557 aa).

The transit peptide at 1–25 directs the protein to the mitochondrion; sequence MAAAGGAALWRRLAAWLPRGPPGLA. 121 to 128 provides a ligand contact to ATP; that stretch reads ASLYLGTG. Residues 212–238 form the PLD phosphodiesterase 1 domain; that stretch reads TIGLQHIKVYLFDDNVILSGANLSDLY. Residues His217, Lys219, and Asp224 contribute to the active site. The disordered stretch occupies residues 322–346; the sequence is TFHSSQQGSSMLPQHDSEASEGLKP. Polar residues predominate over residues 323-333; sequence FHSSQQGSSML. Residues 336-346 show a composition bias toward basic and acidic residues; that stretch reads HDSEASEGLKP. A PLD phosphodiesterase 2 domain is found at 461–494; the sequence is AGWTFHAKGLWLYLAGSSLPCLTLIGSPNFGYRS.

It belongs to the CDP-alcohol phosphatidyltransferase class-II family.

The protein resides in the mitochondrion. The catalysed reaction is a CDP-1,2-diacyl-sn-glycerol + sn-glycerol 3-phosphate = a 1,2-diacyl-sn-glycero-3-phospho-(1'-sn-glycero-3'-phosphate) + CMP + H(+). It participates in phospholipid metabolism; phosphatidylglycerol biosynthesis; phosphatidylglycerol from CDP-diacylglycerol: step 1/2. With respect to regulation, activated by calcium and magnesium and inhibited by other bivalent cations. Its function is as follows. Functions in the biosynthesis of the anionic phospholipids phosphatidylglycerol and cardiolipin. The chain is CDP-diacylglycerol--glycerol-3-phosphate 3-phosphatidyltransferase, mitochondrial (PGS1) from Gallus gallus (Chicken).